The primary structure comprises 397 residues: Tryptophan synthase beta chain (397 aa).

Lysine 88 is modified (N6-(pyridoxal phosphate)lysine).

The protein belongs to the TrpB family. Tetramer of two alpha and two beta chains. The cofactor is pyridoxal 5'-phosphate.

It catalyses the reaction (1S,2R)-1-C-(indol-3-yl)glycerol 3-phosphate + L-serine = D-glyceraldehyde 3-phosphate + L-tryptophan + H2O. Its pathway is amino-acid biosynthesis; L-tryptophan biosynthesis; L-tryptophan from chorismate: step 5/5. The beta subunit is responsible for the synthesis of L-tryptophan from indole and L-serine. In Haemophilus influenzae (strain 86-028NP), this protein is Tryptophan synthase beta chain.